The following is a 243-amino-acid chain: Carboxy-S-adenosyl-L-methionine synthase (243 aa).

Residues Tyr-40, 65–67 (GCS), 90–91 (DN), 118–119 (DI), Asn-133, and Arg-200 contribute to the S-adenosyl-L-methionine site.

This sequence belongs to the class I-like SAM-binding methyltransferase superfamily. Cx-SAM synthase family. Homodimer.

It catalyses the reaction prephenate + S-adenosyl-L-methionine = carboxy-S-adenosyl-L-methionine + 3-phenylpyruvate + H2O. Functionally, catalyzes the conversion of S-adenosyl-L-methionine (SAM) to carboxy-S-adenosyl-L-methionine (Cx-SAM). The polypeptide is Carboxy-S-adenosyl-L-methionine synthase (Shewanella baltica (strain OS155 / ATCC BAA-1091)).